The chain runs to 141 residues: Hemoglobin subunit alpha-A (141 aa).

The Globin domain maps to 1–141 (VLSASDKTNV…VAKELTAKYR (141 aa)). Histidine 58 is an O2 binding site. Histidine 87 contributes to the heme b binding site.

This sequence belongs to the globin family. As to quaternary structure, heterotetramer of two alpha chains and two beta chains. As to expression, red blood cells.

Involved in oxygen transport from the lung to the various peripheral tissues. This Phalacrocorax carbo (Great cormorant) protein is Hemoglobin subunit alpha-A (HBAA).